We begin with the raw amino-acid sequence, 376 residues long: N-acetyldiaminopimelate deacetylase (376 aa).

The active site involves Asp-69. Catalysis depends on Glu-128, which acts as the Proton acceptor.

Belongs to the peptidase M20A family. N-acetyldiaminopimelate deacetylase subfamily.

The catalysed reaction is N-acetyl-(2S,6S)-2,6-diaminopimelate + H2O = (2S,6S)-2,6-diaminopimelate + acetate. Its pathway is amino-acid biosynthesis; L-lysine biosynthesis via DAP pathway; LL-2,6-diaminopimelate from (S)-tetrahydrodipicolinate (acetylase route): step 3/3. Functionally, catalyzes the conversion of N-acetyl-diaminopimelate to diaminopimelate and acetate. This chain is N-acetyldiaminopimelate deacetylase, found in Streptococcus pneumoniae (strain Hungary19A-6).